Here is a 351-residue protein sequence, read N- to C-terminus: Leukotriene B4 receptor 1 (351 aa).

Residues 1-21 lie on the Extracellular side of the membrane; sequence MAANTTSTAATSSPGGMSLSL. A glycan (N-linked (GlcNAc...) asparagine) is linked at Asn-4. The helical transmembrane segment at 22 to 44 threads the bilayer; the sequence is LPIVLLSVALVVGLPGNSFVVWS. The Cytoplasmic segment spans residues 45 to 56; it reads ILKRMQKRSVTA. Residues 57–77 form a helical membrane-spanning segment; the sequence is LLVLNLALADLAVLLTAPFFL. The Extracellular segment spans residues 78–93; that stretch reads HFLARGTWSFEVTGCR. The helical transmembrane segment at 94-115 threads the bilayer; it reads LCHYVCGVSMYASVLLITIMSL. At 116–140 the chain is on the cytoplasmic side; that stretch reads DRSLAVARPFVSQKVRTKAFARWVL. Residues 141–161 traverse the membrane as a helical segment; the sequence is AGIWVVSFLLAIPVLVYRTVT. Residues 162-179 are Extracellular-facing; it reads PKNKTLICDSRYPSDGHK. An N-linked (GlcNAc...) asparagine glycan is attached at Asn-164. A helical transmembrane segment spans residues 180–200; sequence VFHLLFEAITGFLLPFLAVVA. Residues 201–222 are Cytoplasmic-facing; sequence SYSDIGRRLQARRFRRSRRTGR. Residues 223–243 traverse the membrane as a helical segment; sequence LVVLIILAFAAFWLPYHLVNL. Residues 244–268 lie on the Extracellular side of the membrane; that stretch reads VEAGRTLAGWDKNSPAGQRLKLARY. Residues 269–289 traverse the membrane as a helical segment; that stretch reads VLIALAFLSSSVNPVLYACAG. Residues 290–351 lie on the Cytoplasmic side of the membrane; sequence GGLLRSAGVG…TSSTPPESSK (62 aa). Polar residues-rich tracts occupy residues 311–327 and 339–351; these read EVSSTRRGGTLVQTPKA and SFMTSSTPPESSK. The disordered stretch occupies residues 311–351; sequence EVSSTRRGGTLVQTPKATPTCPEPGPTDSFMTSSTPPESSK.

Belongs to the G-protein coupled receptor 1 family. In terms of processing, phosphorylated by GRK6 upon leukotriene B4 binding; which promotes desensitization. As to expression, exclusively expressed in polymorphonuclear leukocytes.

It is found in the cell membrane. Functionally, receptor for leukotriene B4, a potent chemoattractant involved in inflammation and immune response. The protein is Leukotriene B4 receptor 1 (Ltb4r) of Rattus norvegicus (Rat).